The primary structure comprises 439 residues: Na(+)/H(+) antiporter NhaA 1 (439 aa).

Helical transmembrane passes span 14-34, 60-80, 98-118, 127-147, 156-176, 179-199, 213-233, 303-323, 335-355, 375-395, and 408-428; these read ITGG…ANLA, ISLH…FIGL, ALPL…YYFF, GWGI…AMVG, IFLS…IAIF, EQIF…LAVA, IGLI…TIAG, HPIS…GVIV, IVLG…FLFA, IIGT…ISDL, and VAVL…LISA.

Belongs to the NhaA Na(+)/H(+) (TC 2.A.33) antiporter family.

It localises to the cell inner membrane. It carries out the reaction Na(+)(in) + 2 H(+)(out) = Na(+)(out) + 2 H(+)(in). Na(+)/H(+) antiporter that extrudes sodium in exchange for external protons. The chain is Na(+)/H(+) antiporter NhaA 1 from Psychromonas ingrahamii (strain DSM 17664 / CCUG 51855 / 37).